We begin with the raw amino-acid sequence, 249 residues long: Uridylate kinase (249 aa).

Residue 19-22 (KLSG) coordinates ATP. Gly61 lines the UMP pocket. Gly62 and Arg66 together coordinate ATP. Residues Asp81 and 142–149 (TGNPYFTT) contribute to the UMP site. ATP-binding residues include Thr169, Tyr175, and Asp178.

Belongs to the UMP kinase family. Homohexamer.

Its subcellular location is the cytoplasm. It catalyses the reaction UMP + ATP = UDP + ADP. Its pathway is pyrimidine metabolism; CTP biosynthesis via de novo pathway; UDP from UMP (UMPK route): step 1/1. Inhibited by UTP. In terms of biological role, catalyzes the reversible phosphorylation of UMP to UDP. This is Uridylate kinase from Anaeromyxobacter sp. (strain Fw109-5).